We begin with the raw amino-acid sequence, 763 residues long: Elongation factor G, mitochondrial (763 aa).

A mitochondrion-targeting transit peptide spans 1–52 (MFMRLKVLEMNSIRRQTLLRQFTNVYNVVSRSARLCSQAIPKRLFYSTGSRA). Positions 60 to 347 (SRLRNIGISA…AVCDYLPNPS (288 aa)) constitute a tr-type G domain. Residues 69–76 (AHIDSGKT), 145–149 (DTPGH), and 199–202 (NKMD) contribute to the GTP site.

Belongs to the TRAFAC class translation factor GTPase superfamily. Classic translation factor GTPase family. EF-G/EF-2 subfamily.

It is found in the mitochondrion. It functions in the pathway protein biosynthesis; polypeptide chain elongation. In terms of biological role, mitochondrial GTPase that catalyzes the GTP-dependent ribosomal translocation step during translation elongation. During this step, the ribosome changes from the pre-translocational (PRE) to the post-translocational (POST) state as the newly formed A-site-bound peptidyl-tRNA and P-site-bound deacylated tRNA move to the P and E sites, respectively. Catalyzes the coordinated movement of the two tRNA molecules, the mRNA and conformational changes in the ribosome. This is Elongation factor G, mitochondrial (mef1) from Schizosaccharomyces japonicus (strain yFS275 / FY16936) (Fission yeast).